Here is a 23-residue protein sequence, read N- to C-terminus: Mu-conotoxin-like SxIIIB (23 aa).

Glutamine 1 bears the Pyrrolidone carboxylic acid mark. 3 cysteine pairs are disulfide-bonded: cysteine 3–cysteine 16, cysteine 4–cysteine 21, and cysteine 11–cysteine 22. An Alanine amide modification is found at alanine 23.

Belongs to the conotoxin M superfamily. As to expression, expressed by the venom duct.

It is found in the secreted. Functionally, mu-conotoxins block voltage-gated sodium channels (Nav). This Conus striolatus (Cone snail) protein is Mu-conotoxin-like SxIIIB.